Consider the following 297-residue polypeptide: 4-hydroxy-tetrahydrodipicolinate synthase (297 aa).

Thr49 is a pyruvate binding site. Residue Tyr137 is the Proton donor/acceptor of the active site. Lys166 (schiff-base intermediate with substrate) is an active-site residue. Residue Ile208 participates in pyruvate binding.

This sequence belongs to the DapA family. As to quaternary structure, homotetramer; dimer of dimers.

The protein resides in the cytoplasm. The enzyme catalyses L-aspartate 4-semialdehyde + pyruvate = (2S,4S)-4-hydroxy-2,3,4,5-tetrahydrodipicolinate + H2O + H(+). It participates in amino-acid biosynthesis; L-lysine biosynthesis via DAP pathway; (S)-tetrahydrodipicolinate from L-aspartate: step 3/4. In terms of biological role, catalyzes the condensation of (S)-aspartate-beta-semialdehyde [(S)-ASA] and pyruvate to 4-hydroxy-tetrahydrodipicolinate (HTPA). This is 4-hydroxy-tetrahydrodipicolinate synthase from Parabacteroides distasonis (strain ATCC 8503 / DSM 20701 / CIP 104284 / JCM 5825 / NCTC 11152).